The following is a 362-amino-acid chain: UV excision repair protein RAD23 homolog A (362 aa).

A Ubiquitin-like domain is found at 1–81; the sequence is MAVTITLKTL…VVVMVTKAKT (81 aa). 2 disordered regions span residues 80–160 and 201–227; these read KTSP…LVTG and GIPGSPEPEHGSVQESQVSEQPSTEAG. Over residues 88-109 the composition is skewed to low complexity; sequence PSEASPTATPESSTSFPSAPAS. Lys-122 participates in a covalent cross-link: Glycyl lysine isopeptide (Lys-Gly) (interchain with G-Cter in ubiquitin). Phosphoserine occurs at positions 123, 128, 133, 136, and 138. The segment covering 126-144 has biased composition (low complexity); that stretch reads EESAPTTSPESVSGSVPSS. Residues 161–201 enclose the UBA 1 domain; the sequence is SEYETMLTEIMSMGYERERVVAALRASYNNPHRAVEYLLTG. Phosphoserine occurs at positions 205, 294, and 356. Residues 317–357 form the UBA 2 domain; sequence PQEKEAIERLKALGFPESLVIQAYFACEKNENLAANFLLSQ.

Belongs to the RAD23 family. As to quaternary structure, interacts with XPC; the interaction is suggesting the existence of a functional equivalent variant XPC complex. Interacts with PSMD4 and PSMC5. Interacts with ATXN3. Interacts with UBQLN2.

The protein resides in the nucleus. Functionally, multiubiquitin chain receptor involved in modulation of proteasomal degradation. Binds to 'Lys-48'-linked polyubiquitin chains in a length-dependent manner and with a lower affinity to 'Lys-63'-linked polyubiquitin chains. Proposed to be capable to bind simultaneously to the 26S proteasome and to polyubiquitinated substrates and to deliver ubiquitinated proteins to the proteasome. Involved in nucleotide excision repair and is thought to be functional equivalent for RAD23B in global genome nucleotide excision repair (GG-NER) by association with XPC. In vitro, XPC:RAD23A dimer has NER activity. Can stabilize XPC. This chain is UV excision repair protein RAD23 homolog A (RAD23A), found in Bos taurus (Bovine).